Consider the following 215-residue polypeptide: Large ribosomal subunit protein bL25 (215 aa).

The disordered stretch occupies residues D170–K215. Acidic residues-rich tracts occupy residues T183 to E197 and D206 to K215.

The protein belongs to the bacterial ribosomal protein bL25 family. CTC subfamily. In terms of assembly, part of the 50S ribosomal subunit; part of the 5S rRNA/L5/L18/L25 subcomplex. Contacts the 5S rRNA. Binds to the 5S rRNA independently of L5 and L18.

This is one of the proteins that binds to the 5S RNA in the ribosome where it forms part of the central protuberance. This chain is Large ribosomal subunit protein bL25, found in Oceanobacillus iheyensis (strain DSM 14371 / CIP 107618 / JCM 11309 / KCTC 3954 / HTE831).